A 315-amino-acid polypeptide reads, in one-letter code: MSDSLRIIFAGTPDFAARHLDALLTSGHNVVGVFTQPDRPAGRGKKLMPSPVKVLAEEKGLPVFQPVSLRPQENQHLVADLHADVMVVVAYGLILPKAVLDMPRLGCINVHGSLLPRWRGAAPIQRSLWAGDAETGVTIMQMDVGLDTGDMLYKLACPITAEDTSGSLYNKLAELGPQGLITTLKQLADGTATPEAQNEALVTHAEKLSKEEARIDWSLSAAQLERCIRAFNPWPMSWLEIDGQPVKVWQASVIEDATQSLPGTILAATKQGIQVATGKGILNLLSLQPAGKKAMSAQDLLNSRREWFIPGNRLA.

The segment at 2–189 is N-terminal domain; the sequence is SDSLRIIFAG…LITTLKQLAD (188 aa). 113 to 116 contributes to the (6S)-5,6,7,8-tetrahydrofolate binding site; the sequence is SLLP. The tract at residues 210-315 is C-terminal domain; it reads KEEARIDWSL…EWFIPGNRLA (106 aa).

Belongs to the Fmt family.

The enzyme catalyses L-methionyl-tRNA(fMet) + (6R)-10-formyltetrahydrofolate = N-formyl-L-methionyl-tRNA(fMet) + (6S)-5,6,7,8-tetrahydrofolate + H(+). Functionally, attaches a formyl group to the free amino group of methionyl-tRNA(fMet). The formyl group appears to play a dual role in the initiator identity of N-formylmethionyl-tRNA by promoting its recognition by IF2 and preventing the misappropriation of this tRNA by the elongation apparatus. In Salmonella choleraesuis (strain SC-B67), this protein is Methionyl-tRNA formyltransferase.